The chain runs to 177 residues: Protein GrpE (177 aa).

Basic and acidic residues-rich tracts occupy residues 1–19 (MAKH…KETV) and 29–41 (SPEK…ANER). Residues 1–41 (MAKHKHEEHPEDVEVKETVETAEQAESASPEKSELELANER) are disordered.

The protein belongs to the GrpE family. In terms of assembly, homodimer.

It is found in the cytoplasm. In terms of biological role, participates actively in the response to hyperosmotic and heat shock by preventing the aggregation of stress-denatured proteins, in association with DnaK and GrpE. It is the nucleotide exchange factor for DnaK and may function as a thermosensor. Unfolded proteins bind initially to DnaJ; upon interaction with the DnaJ-bound protein, DnaK hydrolyzes its bound ATP, resulting in the formation of a stable complex. GrpE releases ADP from DnaK; ATP binding to DnaK triggers the release of the substrate protein, thus completing the reaction cycle. Several rounds of ATP-dependent interactions between DnaJ, DnaK and GrpE are required for fully efficient folding. The polypeptide is Protein GrpE (Streptococcus gordonii (strain Challis / ATCC 35105 / BCRC 15272 / CH1 / DL1 / V288)).